Consider the following 193-residue polypeptide: NADH-quinone oxidoreductase subunit B (193 aa).

Cys72, Cys73, Cys137, and Cys167 together coordinate [4Fe-4S] cluster.

It belongs to the complex I 20 kDa subunit family. In terms of assembly, NDH-1 is composed of 14 different subunits. Subunits NuoB, C, D, E, F, and G constitute the peripheral sector of the complex. [4Fe-4S] cluster is required as a cofactor.

It is found in the cell inner membrane. The catalysed reaction is a quinone + NADH + 5 H(+)(in) = a quinol + NAD(+) + 4 H(+)(out). Functionally, NDH-1 shuttles electrons from NADH, via FMN and iron-sulfur (Fe-S) centers, to quinones in the respiratory chain. The immediate electron acceptor for the enzyme in this species is believed to be ubiquinone. Couples the redox reaction to proton translocation (for every two electrons transferred, four hydrogen ions are translocated across the cytoplasmic membrane), and thus conserves the redox energy in a proton gradient. This chain is NADH-quinone oxidoreductase subunit B, found in Bartonella bacilliformis (strain ATCC 35685 / KC583 / Herrer 020/F12,63).